The chain runs to 335 residues: Cut9-interacting protein scn1 (335 aa).

It belongs to the metallo-dependent hydrolases superfamily.

Interacts with cut9. This Schizosaccharomyces pombe (strain 972 / ATCC 24843) (Fission yeast) protein is Cut9-interacting protein scn1 (scn1).